We begin with the raw amino-acid sequence, 311 residues long: 4-hydroxy-tetrahydrodipicolinate synthase (311 aa).

Thr-51 contacts pyruvate. Tyr-140 (proton donor/acceptor) is an active-site residue. Catalysis depends on Lys-168, which acts as the Schiff-base intermediate with substrate. Ile-209 provides a ligand contact to pyruvate.

The protein belongs to the DapA family. In terms of assembly, homotetramer; dimer of dimers.

The protein resides in the cytoplasm. It carries out the reaction L-aspartate 4-semialdehyde + pyruvate = (2S,4S)-4-hydroxy-2,3,4,5-tetrahydrodipicolinate + H2O + H(+). It functions in the pathway amino-acid biosynthesis; L-lysine biosynthesis via DAP pathway; (S)-tetrahydrodipicolinate from L-aspartate: step 3/4. Functionally, catalyzes the condensation of (S)-aspartate-beta-semialdehyde [(S)-ASA] and pyruvate to 4-hydroxy-tetrahydrodipicolinate (HTPA). This Streptococcus pneumoniae (strain ATCC BAA-255 / R6) protein is 4-hydroxy-tetrahydrodipicolinate synthase.